The sequence spans 434 residues: uncharacterized protein (434 aa).

The region spanning 4–62 (LLTIHTQVEGEITALAFGGAGILRYHGFVIFVPFTAPGDQIICRIIEIKKSFAVAELVK) is the TRAM domain. Positions 75, 81, 84, and 161 each coordinate [4Fe-4S] cluster. 4 residues coordinate S-adenosyl-L-methionine: glutamine 266, tyrosine 295, glutamate 316, and asparagine 364. The active-site Nucleophile is the cysteine 391.

It belongs to the class I-like SAM-binding methyltransferase superfamily. RNA M5U methyltransferase family.

This is an uncharacterized protein from Protochlamydia amoebophila (strain UWE25).